The primary structure comprises 294 residues: F-box protein SKIP3 (294 aa).

The region spanning 21-67 (SSTLDSLPEGCISNIISFTSPEDACVAAAVSKIFESAVKSDIVWEKF) is the F-box domain.

In terms of assembly, part of a SCF (SKP1-cullin-F-box) protein ligase complex. Interacts with SKP1A/ASK1.

The protein operates within protein modification; protein ubiquitination. The sequence is that of F-box protein SKIP3 (SKIP3) from Arabidopsis thaliana (Mouse-ear cress).